Reading from the N-terminus, the 1040-residue chain is Multidrug resistance protein MdtB (1040 aa).

11 helical membrane-spanning segments follow: residues 15 to 37 (LFIL…GIIG), 345 to 362 (FELM…YLFL), 367 to 389 (ATII…MVFL), 396 to 418 (LTLM…VIEN), 438 to 460 (GEIG…PLLF), 472 to 494 (FAVT…TPMM), 535 to 557 (HPWL…WIVI), 867 to 889 (VWLI…ESFI), 909 to 931 (LIIA…IGIV), 968 to 990 (ILMT…GVGT), and 1000 to 1022 (MVGG…YLLF).

The protein belongs to the resistance-nodulation-cell division (RND) (TC 2.A.6) family. MdtB subfamily. Part of a tripartite efflux system composed of MdtA, MdtB and MdtC. MdtB forms a heteromultimer with MdtC.

Its subcellular location is the cell inner membrane. The polypeptide is Multidrug resistance protein MdtB (Salmonella typhimurium (strain LT2 / SGSC1412 / ATCC 700720)).